Here is an 880-residue protein sequence, read N- to C-terminus: Translation initiation factor IF-2 (880 aa).

The span at 143–228 (EAEAKAKAKA…EAERNGDHHI (86 aa)) shows a compositional bias: basic and acidic residues. The tract at residues 143–289 (EAEAKAKAKA…APESMAHGFN (147 aa)) is disordered. Positions 249-262 (GRRARNKSNAKKRG) are enriched in basic residues. The region spanning 380 to 549 (SRAPVVTIMG…LLQAEVLELK (170 aa)) is the tr-type G domain. The segment at 389–396 (GHVDHGKT) is G1. 389 to 396 (GHVDHGKT) serves as a coordination point for GTP. The interval 414–418 (GITQH) is G2. Residues 435 to 438 (DTPG) are G3. GTP-binding positions include 435–439 (DTPGH) and 489–492 (NKMD). Residues 489 to 492 (NKMD) are G4. The G5 stretch occupies residues 525–527 (SAK).

It belongs to the TRAFAC class translation factor GTPase superfamily. Classic translation factor GTPase family. IF-2 subfamily.

Its subcellular location is the cytoplasm. One of the essential components for the initiation of protein synthesis. Protects formylmethionyl-tRNA from spontaneous hydrolysis and promotes its binding to the 30S ribosomal subunits. Also involved in the hydrolysis of GTP during the formation of the 70S ribosomal complex. The sequence is that of Translation initiation factor IF-2 from Shewanella putrefaciens (strain CN-32 / ATCC BAA-453).